The sequence spans 89 residues: UPF0335 protein Caul_0876 (89 aa).

It belongs to the UPF0335 family.

The chain is UPF0335 protein Caul_0876 from Caulobacter sp. (strain K31).